Consider the following 102-residue polypeptide: Small ribosomal subunit protein uS10 (102 aa).

Belongs to the universal ribosomal protein uS10 family. As to quaternary structure, part of the 30S ribosomal subunit.

Its function is as follows. Involved in the binding of tRNA to the ribosomes. The chain is Small ribosomal subunit protein uS10 from Paracoccus denitrificans (strain Pd 1222).